The primary structure comprises 204 residues: Somatotropin (204 aa).

Positions 1-17 (MDRVLLLLSVLTLGVSS) are cleaved as a signal peptide. Position 18 is a pyrrolidone carboxylic acid (glutamine 18). Histidine 36 is a Zn(2+) binding site. A disulfide bond links cysteine 69 and cysteine 177. Zn(2+) is bound at residue glutamate 186. Cysteine 194 and cysteine 202 are disulfide-bonded.

This sequence belongs to the somatotropin/prolactin family.

The protein localises to the secreted. Its function is as follows. Growth hormone plays an important role in growth control and is involved in the regulation of several anabolic processes. Implicated as an osmoregulatory substance important for seawater adaptation. This Larimichthys crocea (Large yellow croaker) protein is Somatotropin (gh).